The primary structure comprises 382 residues: UBP1-associated proteins 1B (382 aa).

The disordered stretch occupies residues 1–99; it reads MAKEGEERKK…SDESEEIVDS (99 aa). Positions 10 to 22 are enriched in basic residues; it reads KEKKEKKERKERK. The span at 23 to 34 shows a compositional bias: basic and acidic residues; sequence RREAEELAVREK. Residues 163–248 form the RRM domain; sequence RNIFVRGLGW…RPFNSGKPRE (86 aa).

Its subcellular location is the nucleus. Functionally, acts as a component of a complex regulating the turnover of mRNAs in the nucleus. Binds with high affinity to RNA molecules that contain U-rich sequences in 3'-UTRs. May function in complex with UBP1 and contribute to the stabilization of mRNAs in the nucleus. In Arabidopsis thaliana (Mouse-ear cress), this protein is UBP1-associated proteins 1B (UBA1B).